The sequence spans 121 residues: Large ribosomal subunit protein bL12 (121 aa).

It belongs to the bacterial ribosomal protein bL12 family. In terms of assembly, homodimer. Part of the ribosomal stalk of the 50S ribosomal subunit. Forms a multimeric L10(L12)X complex, where L10 forms an elongated spine to which 2 to 4 L12 dimers bind in a sequential fashion. Binds GTP-bound translation factors.

Forms part of the ribosomal stalk which helps the ribosome interact with GTP-bound translation factors. Is thus essential for accurate translation. The protein is Large ribosomal subunit protein bL12 of Pectobacterium atrosepticum (strain SCRI 1043 / ATCC BAA-672) (Erwinia carotovora subsp. atroseptica).